A 72-amino-acid chain; its full sequence is Cell division protein ZapB (72 aa).

The stretch at 1-72 (MSLEILDQLE…RSLLGKIDNV (72 aa)) forms a coiled coil. A disordered region spans residues 33–57 (KNNQSQQANDALRSENEQLKSEHQN). The segment covering 44-57 (LRSENEQLKSEHQN) has biased composition (basic and acidic residues).

Belongs to the ZapB family. As to quaternary structure, homodimer. The ends of the coiled-coil dimer bind to each other, forming polymers. Interacts with FtsZ.

The protein resides in the cytoplasm. Its function is as follows. Non-essential, abundant cell division factor that is required for proper Z-ring formation. It is recruited early to the divisome by direct interaction with FtsZ, stimulating Z-ring assembly and thereby promoting cell division earlier in the cell cycle. Its recruitment to the Z-ring requires functional FtsA or ZipA. The polypeptide is Cell division protein ZapB (Pasteurella multocida (strain Pm70)).